The following is a 460-amino-acid chain: Bifunctional protein GlmU (460 aa).

Residues 1-232 are pyrophosphorylase; the sequence is MAISAALILA…PDEIMGVNDR (232 aa). Residues 9–12, Lys-23, Gln-75, and 80–81 contribute to the UDP-N-acetyl-alpha-D-glucosamine site; these read LAAG and GT. Residue Asp-105 coordinates Mg(2+). UDP-N-acetyl-alpha-D-glucosamine is bound by residues Gly-142, Glu-157, Asn-172, and Asn-230. Residue Asn-230 coordinates Mg(2+). The interval 233–253 is linker; sequence VQLAHAARVLRQRVNLQLMLA. Positions 254–460 are N-acetyltransferase; that stretch reads GVTLIDPDQT…GWCLKKRDNG (207 aa). The UDP-N-acetyl-alpha-D-glucosamine site is built by Arg-336 and Lys-354. Catalysis depends on His-366, which acts as the Proton acceptor. Residues Tyr-369 and Asn-380 each coordinate UDP-N-acetyl-alpha-D-glucosamine. Residues 389–390, Ser-408, Ala-426, and Arg-443 each bind acetyl-CoA; that span reads NY.

This sequence in the N-terminal section; belongs to the N-acetylglucosamine-1-phosphate uridyltransferase family. The protein in the C-terminal section; belongs to the transferase hexapeptide repeat family. Homotrimer. Mg(2+) is required as a cofactor.

The protein localises to the cytoplasm. The enzyme catalyses alpha-D-glucosamine 1-phosphate + acetyl-CoA = N-acetyl-alpha-D-glucosamine 1-phosphate + CoA + H(+). It carries out the reaction N-acetyl-alpha-D-glucosamine 1-phosphate + UTP + H(+) = UDP-N-acetyl-alpha-D-glucosamine + diphosphate. Its pathway is nucleotide-sugar biosynthesis; UDP-N-acetyl-alpha-D-glucosamine biosynthesis; N-acetyl-alpha-D-glucosamine 1-phosphate from alpha-D-glucosamine 6-phosphate (route II): step 2/2. It participates in nucleotide-sugar biosynthesis; UDP-N-acetyl-alpha-D-glucosamine biosynthesis; UDP-N-acetyl-alpha-D-glucosamine from N-acetyl-alpha-D-glucosamine 1-phosphate: step 1/1. The protein operates within bacterial outer membrane biogenesis; LPS lipid A biosynthesis. Functionally, catalyzes the last two sequential reactions in the de novo biosynthetic pathway for UDP-N-acetylglucosamine (UDP-GlcNAc). The C-terminal domain catalyzes the transfer of acetyl group from acetyl coenzyme A to glucosamine-1-phosphate (GlcN-1-P) to produce N-acetylglucosamine-1-phosphate (GlcNAc-1-P), which is converted into UDP-GlcNAc by the transfer of uridine 5-monophosphate (from uridine 5-triphosphate), a reaction catalyzed by the N-terminal domain. In Trichlorobacter lovleyi (strain ATCC BAA-1151 / DSM 17278 / SZ) (Geobacter lovleyi), this protein is Bifunctional protein GlmU.